Reading from the N-terminus, the 294-residue chain is Formamidopyrimidine-DNA glycosylase (294 aa).

The Schiff-base intermediate with DNA role is filled by proline 2. The active-site Proton donor is the glutamate 3. Lysine 58 serves as the catalytic Proton donor; for beta-elimination activity. DNA is bound by residues histidine 105, arginine 124, and lysine 167. The segment at 258-294 adopts an FPG-type zinc-finger fold; sequence QVYDREGEPCRTRGCKGTVKRFTQNGRSTFWCPSCQK. Arginine 284 (proton donor; for delta-elimination activity) is an active-site residue.

Belongs to the FPG family. As to quaternary structure, monomer. Requires Zn(2+) as cofactor.

It catalyses the reaction Hydrolysis of DNA containing ring-opened 7-methylguanine residues, releasing 2,6-diamino-4-hydroxy-5-(N-methyl)formamidopyrimidine.. The enzyme catalyses 2'-deoxyribonucleotide-(2'-deoxyribose 5'-phosphate)-2'-deoxyribonucleotide-DNA = a 3'-end 2'-deoxyribonucleotide-(2,3-dehydro-2,3-deoxyribose 5'-phosphate)-DNA + a 5'-end 5'-phospho-2'-deoxyribonucleoside-DNA + H(+). Its function is as follows. Involved in base excision repair of DNA damaged by oxidation or by mutagenic agents. Acts as a DNA glycosylase that recognizes and removes damaged bases. Has a preference for oxidized purines, such as 7,8-dihydro-8-oxoguanine (8-oxoG). Has AP (apurinic/apyrimidinic) lyase activity and introduces nicks in the DNA strand. Cleaves the DNA backbone by beta-delta elimination to generate a single-strand break at the site of the removed base with both 3'- and 5'-phosphates. This is Formamidopyrimidine-DNA glycosylase from Afipia carboxidovorans (strain ATCC 49405 / DSM 1227 / KCTC 32145 / OM5) (Oligotropha carboxidovorans).